Here is a 204-residue protein sequence, read N- to C-terminus: Thiamine-phosphate synthase (204 aa).

4-amino-2-methyl-5-(diphosphooxymethyl)pyrimidine is bound by residues glutamine 28–lysine 32 and asparagine 60. Positions 61 and 80 each coordinate Mg(2+). 2 residues coordinate 4-amino-2-methyl-5-(diphosphooxymethyl)pyrimidine: serine 99 and lysine 128. 2-[(2R,5Z)-2-carboxy-4-methylthiazol-5(2H)-ylidene]ethyl phosphate is bound by residues glycine 157 and valine 177 to threonine 178.

It belongs to the thiamine-phosphate synthase family. Mg(2+) serves as cofactor.

It catalyses the reaction 2-[(2R,5Z)-2-carboxy-4-methylthiazol-5(2H)-ylidene]ethyl phosphate + 4-amino-2-methyl-5-(diphosphooxymethyl)pyrimidine + 2 H(+) = thiamine phosphate + CO2 + diphosphate. The catalysed reaction is 2-(2-carboxy-4-methylthiazol-5-yl)ethyl phosphate + 4-amino-2-methyl-5-(diphosphooxymethyl)pyrimidine + 2 H(+) = thiamine phosphate + CO2 + diphosphate. It carries out the reaction 4-methyl-5-(2-phosphooxyethyl)-thiazole + 4-amino-2-methyl-5-(diphosphooxymethyl)pyrimidine + H(+) = thiamine phosphate + diphosphate. It participates in cofactor biosynthesis; thiamine diphosphate biosynthesis; thiamine phosphate from 4-amino-2-methyl-5-diphosphomethylpyrimidine and 4-methyl-5-(2-phosphoethyl)-thiazole: step 1/1. Functionally, condenses 4-methyl-5-(beta-hydroxyethyl)thiazole monophosphate (THZ-P) and 2-methyl-4-amino-5-hydroxymethyl pyrimidine pyrophosphate (HMP-PP) to form thiamine monophosphate (TMP). The sequence is that of Thiamine-phosphate synthase from Rhizobium etli (strain ATCC 51251 / DSM 11541 / JCM 21823 / NBRC 15573 / CFN 42).